The primary structure comprises 484 residues: tRNA sulfurtransferase (484 aa).

The region spanning 63–167 (QAFGERLACI…GDKLYMVTKR (105 aa)) is the THUMP domain. Residues 185 to 186 (LI), lysine 267, glycine 289, and glutamine 298 each bind ATP. Cysteine 346 and cysteine 458 are joined by a disulfide. The region spanning 406–484 (IDTNEVVIDI…GYHNVKVYRP (79 aa)) is the Rhodanese domain. Cysteine 458 functions as the Cysteine persulfide intermediate in the catalytic mechanism.

This sequence belongs to the ThiI family.

It localises to the cytoplasm. It carries out the reaction [ThiI sulfur-carrier protein]-S-sulfanyl-L-cysteine + a uridine in tRNA + 2 reduced [2Fe-2S]-[ferredoxin] + ATP + H(+) = [ThiI sulfur-carrier protein]-L-cysteine + a 4-thiouridine in tRNA + 2 oxidized [2Fe-2S]-[ferredoxin] + AMP + diphosphate. The enzyme catalyses [ThiS sulfur-carrier protein]-C-terminal Gly-Gly-AMP + S-sulfanyl-L-cysteinyl-[cysteine desulfurase] + AH2 = [ThiS sulfur-carrier protein]-C-terminal-Gly-aminoethanethioate + L-cysteinyl-[cysteine desulfurase] + A + AMP + 2 H(+). It functions in the pathway cofactor biosynthesis; thiamine diphosphate biosynthesis. Catalyzes the ATP-dependent transfer of a sulfur to tRNA to produce 4-thiouridine in position 8 of tRNAs, which functions as a near-UV photosensor. Also catalyzes the transfer of sulfur to the sulfur carrier protein ThiS, forming ThiS-thiocarboxylate. This is a step in the synthesis of thiazole, in the thiamine biosynthesis pathway. The sulfur is donated as persulfide by IscS. The chain is tRNA sulfurtransferase from Shewanella sp. (strain MR-7).